A 372-amino-acid polypeptide reads, in one-letter code: Pre-small/secreted glycoprotein (372 aa).

The first 32 residues, 1 to 32 (MEGLSLLQLPRDKFRKSSFFVWVIILFQKAFS), serve as a signal peptide directing secretion. N-linked (GlcNAc...) asparagine; by host glycosylation is present at Asn40. Intrachain disulfides connect Cys108–Cys135 and Cys121–Cys147. Asn204, Asn208, Asn238, Asn257, and Asn268 each carry an N-linked (GlcNAc...) asparagine; by host glycan. The tract at residues 320 to 340 (MRHRRELQREESPTGPPGSIR) is disordered.

It belongs to the filoviruses glycoprotein family. In terms of assembly, homodimer; disulfide-linked. The homodimers are linked by two disulfide bonds in a parallel orientation. As to quaternary structure, monomer. This precursor is processed into mature sGP and delta-peptide by host furin or furin-like proteases. The cleavage site corresponds to the furin optimal cleavage sequence [KR]-X-[KR]-R. Post-translationally, N-glycosylated. In terms of processing, O-glycosylated.

Its subcellular location is the secreted. Functionally, seems to possess an anti-inflammatory activity as it can reverse the barrier-decreasing effects of TNF alpha. Might therefore contribute to the lack of inflammatory reaction seen during infection in spite the of extensive necrosis and massive virus production. Does not seem to be involved in activation of primary macrophages. Does not seem to interact specifically with neutrophils. In terms of biological role, viroporin that permeabilizes mammalian cell plasma membranes. It acts by altering permeation of ionic compounds and small molecules. This activity may lead to viral enterotoxic activity. The sequence is that of Pre-small/secreted glycoprotein (GP) from Sudan ebolavirus (strain Boniface-76) (SEBOV).